Here is a 290-residue protein sequence, read N- to C-terminus: Putative phosphatase MPN_427 (290 aa).

Catalysis depends on Asp-16, which acts as the Nucleophile. Residue Asp-16 coordinates Mg(2+). Leu-17 contributes to the phosphate binding site. Residue Asp-18 participates in Mg(2+) binding. Phosphate contacts are provided by residues 53 to 54 (TG) and Lys-216. Mg(2+) is bound by residues Asp-239 and Ser-240. Asn-242 provides a ligand contact to phosphate.

This sequence belongs to the HAD-like hydrolase superfamily. Cof family. The cofactor is Mg(2+).

This chain is Putative phosphatase MPN_427, found in Mycoplasma pneumoniae (strain ATCC 29342 / M129 / Subtype 1) (Mycoplasmoides pneumoniae).